Reading from the N-terminus, the 261-residue chain is DNA repair protein RecO (261 aa).

The protein belongs to the RecO family.

Involved in DNA repair and RecF pathway recombination. The chain is DNA repair protein RecO from Chlorobium phaeobacteroides (strain DSM 266 / SMG 266 / 2430).